A 278-amino-acid polypeptide reads, in one-letter code: uncharacterized protein (278 aa).

The tract at residues 251–278 (TLSENKKQKSSSTSPETDSDMSEFFGDN) is disordered.

This is an uncharacterized protein from Aedes pseudoscutellaris reovirus (isolate France) (ApRV).